We begin with the raw amino-acid sequence, 239 residues long: MIELIPAIDIIDGKCVRLTQGDYATKKVYNEDPLEVAKMFEGNGIRRLHVVDLDGAREGRIINYRILERIATRTSLIIDFGGGLKQEDDLEIAFESGAQMVTGGSIAVKNPEMFTSWISKFGSEKIILGADAKEKKIAISGWEETTSQELVPFIKGYYDKGITKVICTDIARDGMLQGPAIDLYKEIRDEIPFLYIIASGGVSSIEDIEKLSEAGIPAVIFGKAIYEGKIQLKDLLRFT.

Asp9 acts as the Proton acceptor in catalysis. The active-site Proton donor is the Asp131.

The protein belongs to the HisA/HisF family.

The protein resides in the cytoplasm. It catalyses the reaction 1-(5-phospho-beta-D-ribosyl)-5-[(5-phospho-beta-D-ribosylamino)methylideneamino]imidazole-4-carboxamide = 5-[(5-phospho-1-deoxy-D-ribulos-1-ylimino)methylamino]-1-(5-phospho-beta-D-ribosyl)imidazole-4-carboxamide. It participates in amino-acid biosynthesis; L-histidine biosynthesis; L-histidine from 5-phospho-alpha-D-ribose 1-diphosphate: step 4/9. This chain is 1-(5-phosphoribosyl)-5-[(5-phosphoribosylamino)methylideneamino] imidazole-4-carboxamide isomerase, found in Parabacteroides distasonis (strain ATCC 8503 / DSM 20701 / CIP 104284 / JCM 5825 / NCTC 11152).